A 233-amino-acid polypeptide reads, in one-letter code: Beta-fibrinogenase brevinase (233 aa).

The Peptidase S1 domain occupies valine 1–alanine 224. Cystine bridges form between cysteine 7-cysteine 138, cysteine 25-cysteine 41, cysteine 73-cysteine 231, cysteine 117-cysteine 185, cysteine 149-cysteine 164, and cysteine 175-cysteine 200. Histidine 40 (charge relay system) is an active-site residue. The N-linked (GlcNAc...) asparagine glycan is linked to asparagine 54. The active-site Charge relay system is aspartate 85. Asparagine 129 carries an N-linked (GlcNAc...) asparagine glycan. A Cell attachment site motif is present at residues arginine 176 to aspartate 178. Serine 179 functions as the Charge relay system in the catalytic mechanism. An N-linked (GlcNAc...) asparagine glycan is attached at asparagine 226.

It belongs to the peptidase S1 family. Snake venom subfamily. In terms of assembly, heterodimer of the brevinase A chain and the brevinase B chain. Expressed by the venom gland.

The protein localises to the secreted. With respect to regulation, the fibrinolytic activity is completely inhibited by PMSF, diisopropylfluorophosphate (DFP), pefabloc, dithiothreitol (DTT) and Zn(2+), but not by Pepstatin A, E64, iodoacetate, chymostatin, tosyl-Lphenylalanine chloromethyl ketone (TPCK), soybean trypsin inhibitor (SBTI), phosphoramidon, Ca(2+), Co(2+), Cu(2+), Fe(2+), Mg(2+), Mn(2+), K(+), and Na(+). Snake venom serine protease that has fibrinogenolytic activities. Preferentially cleaves the Bbeta-chain (FGB) and more slowly the Aa-chain (FGA) of fibrinogen, but does not affect the gamma-chain. Also has fibrinolytic activity. May play a role in antithrombotic reaction as well as thrombolytic reaction. This Gloydius blomhoffii (Mamushi) protein is Beta-fibrinogenase brevinase.